Reading from the N-terminus, the 63-residue chain is Small ribosomal subunit protein eS17 (63 aa).

It belongs to the eukaryotic ribosomal protein eS17 family.

The protein is Small ribosomal subunit protein eS17 of Methanococcus vannielii (strain ATCC 35089 / DSM 1224 / JCM 13029 / OCM 148 / SB).